The sequence spans 376 residues: 3-dehydroquinate synthase (376 aa).

Residues 115-119 (GVIGD), 139-140 (TS), Lys-152, and Lys-161 each bind NAD(+). The Zn(2+) site is built by Glu-194, His-256, and His-275.

Belongs to the sugar phosphate cyclases superfamily. Dehydroquinate synthase family. Co(2+) serves as cofactor. Zn(2+) is required as a cofactor. It depends on NAD(+) as a cofactor.

The protein resides in the cytoplasm. The catalysed reaction is 7-phospho-2-dehydro-3-deoxy-D-arabino-heptonate = 3-dehydroquinate + phosphate. It participates in metabolic intermediate biosynthesis; chorismate biosynthesis; chorismate from D-erythrose 4-phosphate and phosphoenolpyruvate: step 2/7. In terms of biological role, catalyzes the conversion of 3-deoxy-D-arabino-heptulosonate 7-phosphate (DAHP) to dehydroquinate (DHQ). The polypeptide is 3-dehydroquinate synthase (Rhizobium etli (strain CIAT 652)).